The chain runs to 200 residues: Probable molybdenum cofactor guanylyltransferase (200 aa).

GTP contacts are provided by residues 9 to 11 (LAG), Lys21, Asp69, and Asp100. Residue Asp100 coordinates Mg(2+).

The protein belongs to the MobA family. It depends on Mg(2+) as a cofactor.

It localises to the cytoplasm. It carries out the reaction Mo-molybdopterin + GTP + H(+) = Mo-molybdopterin guanine dinucleotide + diphosphate. Its function is as follows. Transfers a GMP moiety from GTP to Mo-molybdopterin (Mo-MPT) cofactor (Moco or molybdenum cofactor) to form Mo-molybdopterin guanine dinucleotide (Mo-MGD) cofactor. This is Probable molybdenum cofactor guanylyltransferase from Bacillus anthracis (strain CDC 684 / NRRL 3495).